A 174-amino-acid polypeptide reads, in one-letter code: Glutamyl-tRNA(Gln) amidotransferase subunit F, mitochondrial (174 aa).

This sequence belongs to the GatF family. In terms of assembly, subunit of the heterotrimeric GatFAB amidotransferase (AdT) complex, composed of A, B and F subunits.

The protein localises to the mitochondrion inner membrane. It carries out the reaction L-glutamyl-tRNA(Gln) + L-glutamine + ATP + H2O = L-glutaminyl-tRNA(Gln) + L-glutamate + ADP + phosphate + H(+). Its function is as follows. Allows the formation of correctly charged Gln-tRNA(Gln) through the transamidation of misacylated Glu-tRNA(Gln) in the mitochondria. The reaction takes place in the presence of glutamine and ATP through an activated gamma-phospho-Glu-tRNA(Gln). Required for proper protein synthesis within the mitochondrion. The polypeptide is Glutamyl-tRNA(Gln) amidotransferase subunit F, mitochondrial (Kluyveromyces lactis (strain ATCC 8585 / CBS 2359 / DSM 70799 / NBRC 1267 / NRRL Y-1140 / WM37) (Yeast)).